The following is a 642-amino-acid chain: Zinc finger protein 398 (642 aa).

2 disordered regions span residues methionine 1–proline 24 and glutamate 198–serine 225. The 72-residue stretch at valine 143–isoleucine 214 folds into the KRAB domain. The span at alanine 207 to glutamate 220 shows a compositional bias: acidic residues. Lysine 265 participates in a covalent cross-link: Glycyl lysine isopeptide (Lys-Gly) (interchain with G-Cter in SUMO2). The C2H2-type 1; atypical zinc finger occupies phenylalanine 343–histidine 364. A C2H2-type 2; degenerate zinc finger spans residues leucine 370 to histidine 392. 7 C2H2-type zinc fingers span residues proline 398–histidine 420, phenylalanine 427–histidine 449, phenylalanine 455–histidine 477, phenylalanine 483–histidine 505, tyrosine 511–histidine 533, phenylalanine 539–histidine 561, and tyrosine 567–histidine 590. Residues arginine 587–leucine 615 are disordered.

The protein belongs to the krueppel C2H2-type zinc-finger protein family.

It localises to the nucleus. Functions as a transcriptional activator. In Homo sapiens (Human), this protein is Zinc finger protein 398 (ZNF398).